A 283-amino-acid polypeptide reads, in one-letter code: Bifunctional protein FolD (283 aa).

NADP(+) contacts are provided by residues 165–167, S190, and V231; that span reads GRS.

This sequence belongs to the tetrahydrofolate dehydrogenase/cyclohydrolase family. In terms of assembly, homodimer.

The catalysed reaction is (6R)-5,10-methylene-5,6,7,8-tetrahydrofolate + NADP(+) = (6R)-5,10-methenyltetrahydrofolate + NADPH. It catalyses the reaction (6R)-5,10-methenyltetrahydrofolate + H2O = (6R)-10-formyltetrahydrofolate + H(+). It functions in the pathway one-carbon metabolism; tetrahydrofolate interconversion. Its function is as follows. Catalyzes the oxidation of 5,10-methylenetetrahydrofolate to 5,10-methenyltetrahydrofolate and then the hydrolysis of 5,10-methenyltetrahydrofolate to 10-formyltetrahydrofolate. The chain is Bifunctional protein FolD from Bacillus pumilus (strain SAFR-032).